The chain runs to 329 residues: Ketol-acid reductoisomerase (NADP(+)) (329 aa).

Residues 1–181 form the KARI N-terminal Rossmann domain; that stretch reads MKVYYEQDAN…GGTRSGVIET (181 aa). Residues 24–27, Arg47, and 82–85 contribute to the NADP(+) site; these read YGSQ and DQYQ. His107 is an active-site residue. NADP(+) is bound at residue Gly133. The region spanning 182 to 327 is the KARI C-terminal knotted domain; that stretch reads TFREETETDL…ARLRSMMPWL (146 aa). Mg(2+) is bound by residues Asp190, Glu194, Glu226, and Glu230. Ser251 is a binding site for substrate.

Belongs to the ketol-acid reductoisomerase family. Mg(2+) is required as a cofactor.

The catalysed reaction is (2R)-2,3-dihydroxy-3-methylbutanoate + NADP(+) = (2S)-2-acetolactate + NADPH + H(+). The enzyme catalyses (2R,3R)-2,3-dihydroxy-3-methylpentanoate + NADP(+) = (S)-2-ethyl-2-hydroxy-3-oxobutanoate + NADPH + H(+). It functions in the pathway amino-acid biosynthesis; L-isoleucine biosynthesis; L-isoleucine from 2-oxobutanoate: step 2/4. It participates in amino-acid biosynthesis; L-valine biosynthesis; L-valine from pyruvate: step 2/4. In terms of biological role, involved in the biosynthesis of branched-chain amino acids (BCAA). Catalyzes an alkyl-migration followed by a ketol-acid reduction of (S)-2-acetolactate (S2AL) to yield (R)-2,3-dihydroxy-isovalerate. In the isomerase reaction, S2AL is rearranged via a Mg-dependent methyl migration to produce 3-hydroxy-3-methyl-2-ketobutyrate (HMKB). In the reductase reaction, this 2-ketoacid undergoes a metal-dependent reduction by NADPH to yield (R)-2,3-dihydroxy-isovalerate. In Oleidesulfovibrio alaskensis (strain ATCC BAA-1058 / DSM 17464 / G20) (Desulfovibrio alaskensis), this protein is Ketol-acid reductoisomerase (NADP(+)).